We begin with the raw amino-acid sequence, 73 residues long: NADH dehydrogenase [ubiquinone] 1 beta subcomplex subunit 3-B (73 aa).

A helical transmembrane segment spans residues 31–48 (ALPGLGIGVAAFCVYLVG).

This sequence belongs to the complex I NDUFB3 subunit family. As to quaternary structure, complex I is composed of at least 49 different subunits.

It localises to the mitochondrion inner membrane. Functionally, accessory subunit of the mitochondrial membrane respiratory chain NADH dehydrogenase (Complex I), that is believed not to be involved in catalysis. Complex I functions in the transfer of electrons from NADH to the respiratory chain. The immediate electron acceptor for the enzyme is believed to be ubiquinone. In Arabidopsis thaliana (Mouse-ear cress), this protein is NADH dehydrogenase [ubiquinone] 1 beta subcomplex subunit 3-B.